A 148-amino-acid chain; its full sequence is Isotocin-neurophysin IT 2 (148 aa).

Positions 1 to 20 (MSGSMSSVFSLLYLLSVCSA) are cleaved as a signal peptide. An intrachain disulfide couples cysteine 21 to cysteine 26. Glycine 29 is subject to Glycine amide. 7 disulfides stabilise this stretch: cysteine 42–cysteine 86, cysteine 45–cysteine 59, cysteine 53–cysteine 76, cysteine 60–cysteine 66, cysteine 93–cysteine 105, cysteine 99–cysteine 117, and cysteine 106–cysteine 111.

The protein belongs to the vasopressin/oxytocin family.

Functionally, isotocin causes contraction of smooth muscles. The sequence is that of Isotocin-neurophysin IT 2 from Catostomus commersonii (White sucker).